The following is a 391-amino-acid chain: MEPLRALELYSGIGGMHQALRESCIPAQVVAAVDVNTVANEVYKYNFPHTQLLAKTIEGITLEEFDRLSFNMILMSPPCQPFTRIGLQGDVTDPRTNSFLHILDILPRLQKLPKYILLENVKGFEMSSTRDLLIQTIENCGFQYQEFLLSPTSLGIPNSRLRYFLIAKLQPEPFPFQAPGQVLMEFPKTESEHPPKYAINAEKKTEEKKTGPKICFDSSTQCSGKEAILFKLETAGEIDRKHQQDSDLSVRMLKDFLEDDIDKHSFFLPPKSLLRYALLLDIVKPTSRRSMCFTKGYGRYIEGTGSVLQTTEDVQIENIYKSLTSLSQEEKIMRLSMLQLRFFTPKEIANLLGFPPEFGFPEMTTVKQRYRLLGNSLNVHVVAKLIKILCD.

Positions 4–391 (LRALELYSGI…VAKLIKILCD (388 aa)) constitute an SAM-dependent MTase C5-type domain. Residues 13 to 15 (IGG), aspartate 34, 57 to 58 (IE), and serine 76 contribute to the S-adenosyl-L-methionine site. The active site involves cysteine 79. An S-adenosyl-L-methionine-binding site is contributed by serine 376.

The protein belongs to the class I-like SAM-binding methyltransferase superfamily. C5-methyltransferase family.

The protein resides in the cytoplasm. The catalysed reaction is cytidine(38) in tRNA + S-adenosyl-L-methionine = 5-methylcytidine(38) in tRNA + S-adenosyl-L-homocysteine + H(+). In terms of biological role, specifically methylates cytosine 38 in the anticodon loop of tRNA(Asp). Has higher activity on tRNA(Asp) modified with queuosine at position 34. The sequence is that of tRNA (cytosine(38)-C(5))-methyltransferase (TRDMT1) from Bos taurus (Bovine).